The chain runs to 551 residues: Interleukin-2 receptor subunit beta (551 aa).

The N-terminal stretch at 1 to 26 (MAAPALSWRLPLLILLLPLATPWASA) is a signal peptide. The Extracellular segment spans residues 27–240 (TVNGTSQFTC…TKPASLGKDT (214 aa)). Residues N29, N43, and N71 are each glycosylated (N-linked (GlcNAc...) asparagine). C36 and C46 are oxidised to a cystine. The cysteines at positions 74 and 86 are disulfide-linked. A Fibronectin type-III domain is found at 134 to 234 (APISLQVVHV…QPLAFRTKPA (101 aa)). The N-linked (GlcNAc...) asparagine glycan is linked to N149. Positions 220–224 (WSPWS) match the WSXWS motif motif. The helical transmembrane segment at 241 to 265 (IPWLGHLLVGLSGAFGFIILVYLLI) threads the bilayer. At 266–551 (NCRNTGPWLK…LQGQDPTHLV (286 aa)) the chain is on the cytoplasmic side. The short motif at 278–286 (LKCHTPDPS) is the Box 1 motif element. 2 disordered regions span residues 393–412 (DEGVAGAPTGSSPQPLQPLS) and 433–476 (SLLG…GPPT).

The protein belongs to the type I cytokine receptor family. Type 4 subfamily. In terms of assembly, non-covalent dimer of an alpha and a beta subunit. IL2R exists in 3 different forms: a high affinity dimer, an intermediate affinity monomer (beta subunit), and a low affinity monomer (alpha subunit). The high and intermediate affinity forms also associate with a gamma subunit. Interacts with SHB upon interleukin stimulation.

The protein resides in the cell membrane. It localises to the cell surface. Functionally, receptor for interleukin-2. This beta subunit is involved in receptor mediated endocytosis and transduces the mitogenic signals of IL2. Probably in association with IL15RA, involved in the stimulation of neutrophil phagocytosis by IL15. In Pan troglodytes (Chimpanzee), this protein is Interleukin-2 receptor subunit beta (IL2RB).